We begin with the raw amino-acid sequence, 264 residues long: 4-hydroxy-tetrahydrodipicolinate reductase (264 aa).

8 to 13 provides a ligand contact to NAD(+); sequence GPRGNM. An NADP(+)-binding site is contributed by K36. Residues 97–99 and 123–126 each bind NAD(+); these read GTT and APNF. The active-site Proton donor/acceptor is the H153. (S)-2,3,4,5-tetrahydrodipicolinate is bound at residue H154. Residue K157 is the Proton donor of the active site. 163 to 164 is a (S)-2,3,4,5-tetrahydrodipicolinate binding site; sequence GT.

This sequence belongs to the DapB family.

The protein localises to the cytoplasm. The catalysed reaction is (S)-2,3,4,5-tetrahydrodipicolinate + NAD(+) + H2O = (2S,4S)-4-hydroxy-2,3,4,5-tetrahydrodipicolinate + NADH + H(+). It catalyses the reaction (S)-2,3,4,5-tetrahydrodipicolinate + NADP(+) + H2O = (2S,4S)-4-hydroxy-2,3,4,5-tetrahydrodipicolinate + NADPH + H(+). It participates in amino-acid biosynthesis; L-lysine biosynthesis via DAP pathway; (S)-tetrahydrodipicolinate from L-aspartate: step 4/4. Its function is as follows. Catalyzes the conversion of 4-hydroxy-tetrahydrodipicolinate (HTPA) to tetrahydrodipicolinate. This Shouchella clausii (strain KSM-K16) (Alkalihalobacillus clausii) protein is 4-hydroxy-tetrahydrodipicolinate reductase.